The chain runs to 176 residues: Cytochrome b (176 aa).

The next 3 membrane-spanning stretches (helical) occupy residues F33–M53, W77–V98, and W113–L133. The heme b site is built by H83 and H97.

It belongs to the cytochrome b family. In terms of assembly, the cytochrome bc1 complex contains 11 subunits: 3 respiratory subunits (MT-CYB, CYC1 and UQCRFS1), 2 core proteins (UQCRC1 and UQCRC2) and 6 low-molecular weight proteins (UQCRH/QCR6, UQCRB/QCR7, UQCRQ/QCR8, UQCR10/QCR9, UQCR11/QCR10 and a cleavage product of UQCRFS1). This cytochrome bc1 complex then forms a dimer. Requires heme b as cofactor.

It is found in the mitochondrion inner membrane. In terms of biological role, component of the ubiquinol-cytochrome c reductase complex (complex III or cytochrome b-c1 complex) that is part of the mitochondrial respiratory chain. The b-c1 complex mediates electron transfer from ubiquinol to cytochrome c. Contributes to the generation of a proton gradient across the mitochondrial membrane that is then used for ATP synthesis. This chain is Cytochrome b (MT-CYB), found in Nycticeius humeralis (Evening bat).